Reading from the N-terminus, the 395-residue chain is Elongation factor Tu (395 aa).

One can recognise a tr-type G domain in the interval 10 to 204; that stretch reads KPHLNIGTIG…TVDNYIKEPI (195 aa). Positions 19–26 are G1; that stretch reads GHVDHGKT. 19–26 is a binding site for GTP; that stretch reads GHVDHGKT. Thr-26 provides a ligand contact to Mg(2+). A G2 region spans residues 60–64; it reads GITIN. The tract at residues 81 to 84 is G3; it reads DCPG. Residues 81 to 85 and 136 to 139 each bind GTP; these read DCPGH and NKVD. The tract at residues 136–139 is G4; that stretch reads NKVD. Positions 174–176 are G5; the sequence is SAL.

Belongs to the TRAFAC class translation factor GTPase superfamily. Classic translation factor GTPase family. EF-Tu/EF-1A subfamily. In terms of assembly, monomer.

It localises to the cytoplasm. The catalysed reaction is GTP + H2O = GDP + phosphate + H(+). Functionally, GTP hydrolase that promotes the GTP-dependent binding of aminoacyl-tRNA to the A-site of ribosomes during protein biosynthesis. The sequence is that of Elongation factor Tu from Karelsulcia muelleri (strain GWSS) (Sulcia muelleri).